A 370-amino-acid chain; its full sequence is Aminomethyltransferase (370 aa).

Belongs to the GcvT family. The glycine cleavage system is composed of four proteins: P, T, L and H.

The enzyme catalyses N(6)-[(R)-S(8)-aminomethyldihydrolipoyl]-L-lysyl-[protein] + (6S)-5,6,7,8-tetrahydrofolate = N(6)-[(R)-dihydrolipoyl]-L-lysyl-[protein] + (6R)-5,10-methylene-5,6,7,8-tetrahydrofolate + NH4(+). Its function is as follows. The glycine cleavage system catalyzes the degradation of glycine. The protein is Aminomethyltransferase of Clostridium botulinum (strain 657 / Type Ba4).